Here is a 101-residue protein sequence, read N- to C-terminus: Small ribosomal subunit protein bS18c (101 aa).

A compositionally biased stretch (basic residues) spans 1 to 19 (MDKSKRLFRKSKRSFRRRL). The disordered stretch occupies residues 1 to 23 (MDKSKRLFRKSKRSFRRRLPPIG).

This sequence belongs to the bacterial ribosomal protein bS18 family. In terms of assembly, part of the 30S ribosomal subunit.

It is found in the plastid. It localises to the chloroplast. This is Small ribosomal subunit protein bS18c from Liriodendron tulipifera (Tuliptree).